Reading from the N-terminus, the 194-residue chain is Inosine triphosphate pyrophosphatase (194 aa).

10 to 15 (TTNLKK) contributes to the ITP binding site. Residue glutamate 36 participates in Mg(2+) binding. ITP is bound by residues lysine 48, 66–67 (DT), lysine 83, lysine 166, and 171–172 (HR).

It belongs to the HAM1 NTPase family. In terms of assembly, homodimer. Requires Mg(2+) as cofactor. Mn(2+) serves as cofactor.

It localises to the cytoplasm. It is found in the nucleus. The enzyme catalyses ITP + H2O = IMP + diphosphate + H(+). The catalysed reaction is dITP + H2O = dIMP + diphosphate + H(+). It catalyses the reaction XTP + H2O = XMP + diphosphate + H(+). In terms of biological role, pyrophosphatase that hydrolyzes non-canonical purine nucleotides such as inosine triphosphate (ITP), deoxyinosine triphosphate (dITP) or xanthosine 5'-triphosphate (XTP) to their respective monophosphate derivatives. The enzyme does not distinguish between the deoxy- and ribose forms. Probably excludes non-canonical purines from RNA and DNA precursor pools, thus preventing their incorporation into RNA and DNA and avoiding chromosomal lesions. The polypeptide is Inosine triphosphate pyrophosphatase (Encephalitozoon intestinalis (strain ATCC 50506) (Microsporidian parasite)).